We begin with the raw amino-acid sequence, 955 residues long: Glycine dehydrogenase (decarboxylating) (955 aa).

Lys-705 bears the N6-(pyridoxal phosphate)lysine mark.

The protein belongs to the GcvP family. The glycine cleavage system is composed of four proteins: P, T, L and H. Requires pyridoxal 5'-phosphate as cofactor.

The catalysed reaction is N(6)-[(R)-lipoyl]-L-lysyl-[glycine-cleavage complex H protein] + glycine + H(+) = N(6)-[(R)-S(8)-aminomethyldihydrolipoyl]-L-lysyl-[glycine-cleavage complex H protein] + CO2. In terms of biological role, the glycine cleavage system catalyzes the degradation of glycine. The P protein binds the alpha-amino group of glycine through its pyridoxal phosphate cofactor; CO(2) is released and the remaining methylamine moiety is then transferred to the lipoamide cofactor of the H protein. This chain is Glycine dehydrogenase (decarboxylating), found in Aliivibrio salmonicida (strain LFI1238) (Vibrio salmonicida (strain LFI1238)).